Here is a 266-residue protein sequence, read N- to C-terminus: CAAX prenyl protease 2 (266 aa).

3 consecutive transmembrane segments (helical) span residues 1 to 21 (MGAG…VHLF), 42 to 59 (LLSN…LRDY), and 78 to 98 (ITYP…MMQI). Active-site proton donor/acceptor residues include Glu-131 and His-164. A run of 3 helical transmembrane segments spans residues 186-206 (GFQF…QLTT), 210-230 (IVPI…WLEI), and 239-259 (RLTL…LLYT).

This sequence belongs to the peptidase U48 family.

The protein resides in the endoplasmic reticulum membrane. Its subcellular location is the membrane. It carries out the reaction Hydrolyzes the peptide bond -P2-(S-farnesyl or geranylgeranyl)C-P1'-P2'-P3'-COOH where P1' and P2' are amino acids with aliphatic sidechains and P3' is any C-terminal residue.. Functionally, protease involved in the processing of a variety of prenylated proteins containing the C-terminal CAAX motif, where C is a cysteine modified with an isoprenoid lipid, A is an aliphatic amino acid and X is any C-terminal amino acid. Proteolytically removes the C-terminal three residues of farnesylated and geranylated proteins, leaving the prenylated cysteine as the new C-terminus. The chain is CAAX prenyl protease 2 from Caenorhabditis elegans.